We begin with the raw amino-acid sequence, 102 residues long: Small ribosomal subunit protein uS10 (102 aa).

The protein belongs to the universal ribosomal protein uS10 family. In terms of assembly, part of the 30S ribosomal subunit.

Functionally, involved in the binding of tRNA to the ribosomes. This is Small ribosomal subunit protein uS10 from Macrococcus caseolyticus (strain JCSC5402) (Macrococcoides caseolyticum).